Reading from the N-terminus, the 919-residue chain is Transcriptional regulatory protein EDS1 (919 aa).

The disordered stretch occupies residues 1 to 54; it reads MSHHVPNLYGTPIRDPHERKRNSASMGEVNQSVSSRNCERGSEKGTKQRKKASH. Polar residues predominate over residues 23 to 36; the sequence is SASMGEVNQSVSSR. Over residues 37-46 the composition is skewed to basic and acidic residues; it reads NCERGSEKGT. Positions 56–85 form a DNA-binding region, zn(2)-C6 fungal-type; sequence CDQCRRKRIKCRFDKHTGVCQGCLEVGEKC. The segment at 297-338 is disordered; the sequence is AGFPNKKLGTDGRSDKWDKNSTWKPVYRSSNPSHPSTEKNVS. The span at 304 to 317 shows a compositional bias: basic and acidic residues; the sequence is LGTDGRSDKWDKNS. Over residues 318–338 the composition is skewed to polar residues; sequence TWKPVYRSSNPSHPSTEKNVS.

This sequence belongs to the EDS1/RGT1 family. Binds DNA in a sequence-specific manner.

Its subcellular location is the nucleus. In Saccharomyces cerevisiae (strain ATCC 204508 / S288c) (Baker's yeast), this protein is Transcriptional regulatory protein EDS1 (EDS1).